The following is a 438-amino-acid chain: Phosphoribosylamine--glycine ligase (438 aa).

The 213-residue stretch at 107–319 folds into the ATP-grasp domain; it reads RKLFEDYDIP…LAKISKQIVD (213 aa). 134–197 contacts ATP; it reads IDNFDEPVVV…EELLLGEEYT (64 aa). The Mg(2+) site is built by glutamine 277, glutamate 289, and asparagine 291. Residues glutamine 277, glutamate 289, and asparagine 291 each coordinate Mn(2+).

The protein belongs to the GARS family. It depends on Mg(2+) as a cofactor. The cofactor is Mn(2+).

The catalysed reaction is 5-phospho-beta-D-ribosylamine + glycine + ATP = N(1)-(5-phospho-beta-D-ribosyl)glycinamide + ADP + phosphate + H(+). The protein operates within purine metabolism; IMP biosynthesis via de novo pathway; N(1)-(5-phospho-D-ribosyl)glycinamide from 5-phospho-alpha-D-ribose 1-diphosphate: step 2/2. The polypeptide is Phosphoribosylamine--glycine ligase (Methanosphaera stadtmanae (strain ATCC 43021 / DSM 3091 / JCM 11832 / MCB-3)).